A 339-amino-acid polypeptide reads, in one-letter code: Adenylosuccinate synthetase (339 aa).

GTP-binding positions include 12-18 (GDEGKGS) and 42-44 (GHS). The active-site Proton acceptor is Asp13. Mg(2+) is bound by residues Asp13 and Gly42. IMP contacts are provided by residues 13 to 16 (DEGK), 40 to 43 (NAGH), Thr127, Arg141, Gln179, Thr194, and Arg256. Catalysis depends on His43, which acts as the Proton donor. 252-258 (TVTGRRR) contributes to the substrate binding site. Residues Arg258, 284–286 (MLD), and 324–326 (KTG) each bind GTP.

This sequence belongs to the adenylosuccinate synthetase family. In terms of assembly, homodimer. Mg(2+) is required as a cofactor.

The protein localises to the cytoplasm. The catalysed reaction is IMP + L-aspartate + GTP = N(6)-(1,2-dicarboxyethyl)-AMP + GDP + phosphate + 2 H(+). The protein operates within purine metabolism; AMP biosynthesis via de novo pathway; AMP from IMP: step 1/2. Functionally, plays an important role in the de novo pathway of purine nucleotide biosynthesis. Catalyzes the first committed step in the biosynthesis of AMP from IMP. In Pyrococcus sp. (strain ST700), this protein is Adenylosuccinate synthetase.